The primary structure comprises 260 residues: Putative ABC transporter ATP-binding protein PF0068 (260 aa).

The ABC transporter domain occupies 2 to 234 (IEVKGVWFWY…DLKRYKLEEP (233 aa)). Residue 34 to 41 (GPNGSGKT) participates in ATP binding.

The protein belongs to the ABC transporter superfamily.

It localises to the cell membrane. Probably part of an ABC transporter complex. Responsible for energy coupling to the transport system. This Pyrococcus furiosus (strain ATCC 43587 / DSM 3638 / JCM 8422 / Vc1) protein is Putative ABC transporter ATP-binding protein PF0068.